Consider the following 243-residue polypeptide: Ribonuclease 3 (243 aa).

The RNase III domain occupies 10–146; the sequence is INRFRKRFDT…FIGALYLDQG (137 aa). A Mg(2+)-binding site is contributed by Glu-59. Asp-63 is an active-site residue. Mg(2+) contacts are provided by Asp-132 and Glu-135. Residue Glu-135 is part of the active site. The 70-residue stretch at 172 to 241 folds into the DRBM domain; sequence DFKTQFQEYV…AESAYKQLKQ (70 aa). Basic and acidic residues predominate over residues 219 to 231; sequence GKGKTKKESEQRA. The disordered stretch occupies residues 219 to 243; that stretch reads GKGKTKKESEQRAAESAYKQLKQIK.

Belongs to the ribonuclease III family. In terms of assembly, homodimer. Requires Mg(2+) as cofactor.

It is found in the cytoplasm. The enzyme catalyses Endonucleolytic cleavage to 5'-phosphomonoester.. In terms of biological role, digests double-stranded RNA. Involved in the processing of primary rRNA transcript to yield the immediate precursors to the large and small rRNAs (23S and 16S). Processes some mRNAs, and tRNAs when they are encoded in the rRNA operon. Processes pre-crRNA and tracrRNA of type II CRISPR loci if present in the organism. This Staphylococcus aureus (strain bovine RF122 / ET3-1) protein is Ribonuclease 3.